The primary structure comprises 257 residues: Diphthine synthase (257 aa).

Residues leucine 9, aspartate 86, valine 89, 114–115 (SI), leucine 166, alanine 207, and histidine 232 each bind S-adenosyl-L-methionine.

This sequence belongs to the diphthine synthase family. Homodimer.

It catalyses the reaction 2-[(3S)-amino-3-carboxypropyl]-L-histidyl-[translation elongation factor 2] + 3 S-adenosyl-L-methionine = diphthine-[translation elongation factor 2] + 3 S-adenosyl-L-homocysteine + 3 H(+). Its pathway is protein modification; peptidyl-diphthamide biosynthesis. S-adenosyl-L-methionine-dependent methyltransferase that catalyzes the trimethylation of the amino group of the modified target histidine residue in translation elongation factor 2 (EF-2), to form an intermediate called diphthine. The three successive methylation reactions represent the second step of diphthamide biosynthesis. This is Diphthine synthase from Methanocella arvoryzae (strain DSM 22066 / NBRC 105507 / MRE50).